A 56-amino-acid chain; its full sequence is Large ribosomal subunit protein bL33 (56 aa).

This sequence belongs to the bacterial ribosomal protein bL33 family.

The sequence is that of Large ribosomal subunit protein bL33 from Haemophilus influenzae (strain 86-028NP).